The chain runs to 53 residues: Neuronal protein NP-190 (53 aa).

As to expression, mainly expressed in the fetal brain where it is specifically localized to the proximal axonal segments, cell bodies and growth cones. Lower level of expression was also detected in the fetal heart and the skeletal muscle. No expression in kidney, liver, lung or spleen.

The protein localises to the membrane. Its function is as follows. Neuronal antigen that may play a role in brain development. May be involved in neurite formation or axonal guidance. This Sus scrofa (Pig) protein is Neuronal protein NP-190.